The sequence spans 501 residues: Lysine--tRNA ligase (501 aa).

The Mg(2+) site is built by Glu411 and Glu418.

This sequence belongs to the class-II aminoacyl-tRNA synthetase family. In terms of assembly, homodimer. Requires Mg(2+) as cofactor.

The protein resides in the cytoplasm. It catalyses the reaction tRNA(Lys) + L-lysine + ATP = L-lysyl-tRNA(Lys) + AMP + diphosphate. The chain is Lysine--tRNA ligase from Pseudomonas aeruginosa (strain LESB58).